A 120-amino-acid chain; its full sequence is Small ribosomal subunit protein bS6 (120 aa).

The disordered stretch occupies residues 93 to 120 (KKADTAPSSMMKTVEREEARKASQTEQA). The span at 105–120 (TVEREEARKASQTEQA) shows a compositional bias: basic and acidic residues.

The protein belongs to the bacterial ribosomal protein bS6 family.

Its function is as follows. Binds together with bS18 to 16S ribosomal RNA. In Delftia acidovorans (strain DSM 14801 / SPH-1), this protein is Small ribosomal subunit protein bS6.